The chain runs to 462 residues: MSLSLWQQCLARLQDELPATEFSMWIRPLQAELSDNTLALYAPNRFVLDWVRDKYLNNINGLLNDFCGTEVPLLRFEVGSKPAARAHNNPVTASVSAPVAPVTRSAPMRPSWDNSPAQPELSYRSNVNPKHTFDNFVEGKSNQLARAAARQVADNPGGAYNPLFLYGGTGLGKTHLLHAVGNGIMARKANAKVVYMHSERFVQDMVKALQNNAIEEFKRYYRSVDALLIDDIQFFANKERSQEEFFHTFNALLEGNQQIILTSDRYPKEINGVEDRLKSRFGWGLTVAIEPPELETRVAILMKKADENDIRLPGEVAFFIAKRLRSNVRELEGALNRVIANANFTGRAITIDFVREALRDLLALQEKLVTIDNIQKTVAEYYKIKVADLLSKRRSRSVARPRQMAMALAKELTNHSLPEIGDAFGGRDHTTVLHACRKIEQLREESHDIKEDFSNLIRTLSS.

Positions 1-83 are domain I, interacts with DnaA modulators; that stretch reads MSLSLWQQCL…LRFEVGSKPA (83 aa). A domain II region spans residues 83 to 125; the sequence is AARAHNNPVTASVSAPVAPVTRSAPMRPSWDNSPAQPELSYRS. Residues 104-125 are disordered; the sequence is RSAPMRPSWDNSPAQPELSYRS. The span at 112-125 shows a compositional bias: polar residues; that stretch reads WDNSPAQPELSYRS. The interval 126–342 is domain III, AAA+ region; it reads NVNPKHTFDN…GALNRVIANA (217 aa). Gly-170, Gly-172, Lys-173, and Thr-174 together coordinate ATP. The segment at 343–462 is domain IV, binds dsDNA; sequence NFTGRAITID…FSNLIRTLSS (120 aa).

This sequence belongs to the DnaA family. Oligomerizes as a right-handed, spiral filament on DNA at oriC.

The protein localises to the cytoplasm. Its function is as follows. Plays an essential role in the initiation and regulation of chromosomal replication. ATP-DnaA binds to the origin of replication (oriC) to initiate formation of the DNA replication initiation complex once per cell cycle. Binds the DnaA box (a 9 base pair repeat at the origin) and separates the double-stranded (ds)DNA. Forms a right-handed helical filament on oriC DNA; dsDNA binds to the exterior of the filament while single-stranded (ss)DNA is stabiized in the filament's interior. The ATP-DnaA-oriC complex binds and stabilizes one strand of the AT-rich DNA unwinding element (DUE), permitting loading of DNA polymerase. After initiation quickly degrades to an ADP-DnaA complex that is not apt for DNA replication. Binds acidic phospholipids. The chain is Chromosomal replication initiator protein DnaA from Yersinia pseudotuberculosis serotype O:1b (strain IP 31758).